The primary structure comprises 571 residues: Hsp70-Hsp90 organizing protein 2 (571 aa).

TPR repeat units follow at residues 2 to 35, 37 to 69, and 70 to 103; these read ADEA…TPTN, VLFS…KPDW, and GKGY…DPSN. The segment at 117–137 is disordered; sequence ASRSRASAPNPFGDAFQGPEM. The STI1 1 domain maps to 134 to 173; sequence GPEMWSKLTADPSTRGLLKQPDFVNMMKEIQRNPSNLNLY. S168 carries the phosphoserine modification. Positions 198–207 are enriched in acidic residues; sequence DDMEIGEEEM. Residues 198-245 are disordered; it reads DDMEIGEEEMAVPSRKEPEVEKKRKPEPEPEPEPEFGEEKQKKLKAQK. Basic and acidic residues-rich tracts occupy residues 211 to 225 and 234 to 245; these read SRKE…KPEP and GEEKQKKLKAQK. The Bipartite nuclear localization signal signature appears at 240–257; that stretch reads KLKAQKEKELGNAAYKKK. TPR repeat units follow at residues 243–276, 278–310, 322–355, 382–415, 417–449, and 450–483; these read AQKE…DDED, SYIT…GREL, TRKG…HRNP, GDEE…NPKD, RAYS…DPTF, and LKGY…DPNN. An STI1 2 domain is found at 520–559; that stretch reads DPEIQNILTDPVMRQVLSDLQENPAAAQKHMQNPMIMNKI.

In terms of assembly, co-chaperone that forms a complex with HSP70 and HSP90 and preproteins (e.g. chloroplast preproteins). Phosphorylated. In terms of processing, acetylated.

The protein resides in the cytoplasm. It localises to the nucleus. In terms of biological role, mediates the association of the molecular chaperones HSP70 and HSP90. Mediates nuclear encoded chloroplast preproteins binding to HSP90 prior to chloroplastic sorting. The protein is Hsp70-Hsp90 organizing protein 2 (HOP2) of Arabidopsis thaliana (Mouse-ear cress).